Reading from the N-terminus, the 129-residue chain is Glycine cleavage system H protein (129 aa).

Residues 24-106 form the Lipoyl-binding domain; sequence SYTVGITEHA…YGEGWFFRVM (83 aa). Residue K65 is modified to N6-lipoyllysine.

This sequence belongs to the GcvH family. The glycine cleavage system is composed of four proteins: P, T, L and H. (R)-lipoate is required as a cofactor.

In terms of biological role, the glycine cleavage system catalyzes the degradation of glycine. The H protein shuttles the methylamine group of glycine from the P protein to the T protein. The chain is Glycine cleavage system H protein from Shewanella sp. (strain MR-7).